Reading from the N-terminus, the 456-residue chain is MLNNAMSVVILAAGKGTRMYSDLPKVLHTLAGKAMVQHVIDAANELGAAHVHLVYGHGGDLLKQALKDDNLNWVLQAEQLGTGHAMQQAAPFFADDEDILMLYGDVPLISVETLQHLRDAKPQGGIGLLTVKLDDPTGYGRITRENGKVTGIVEHKDATDEQRQIQEINTGILIANGADMKRWLAKLTNNNAQGEYYITDIIALAYQEGREIVAVHPQRLSEVEGVNNRLQLSRLERVYQSEQAEKLLLAGVMLRDPARFDLRGTLTHGRDVEIDTNVIIEGNVTLGHRVKIGTGCVIKNSVIGDDCEISPYTVVEDANLAAACTIGPFARLRPGAELLEGAHVGNFVEMKKARLGKGSKAGHLTYLGDAEIGDNVNIGAGTITCNYDGANKFKTIIGDDVFVGSDTQLVAPVTVGKGATIAAGTTVTRNVGENALAISRVPQTQKEGWRRPVKKK.

The pyrophosphorylase stretch occupies residues 1 to 229 (MLNNAMSVVI…LSEVEGVNNR (229 aa)). UDP-N-acetyl-alpha-D-glucosamine contacts are provided by residues 11-14 (LAAG), K25, Q76, 81-82 (GT), 103-105 (YGD), G140, E154, N169, and N227. Residue D105 coordinates Mg(2+). N227 lines the Mg(2+) pocket. Residues 230-250 (LQLSRLERVYQSEQAEKLLLA) are linker. The segment at 251 to 456 (GVMLRDPARF…EGWRRPVKKK (206 aa)) is N-acetyltransferase. R333 and K351 together coordinate UDP-N-acetyl-alpha-D-glucosamine. Residue H363 is the Proton acceptor of the active site. 2 residues coordinate UDP-N-acetyl-alpha-D-glucosamine: Y366 and N377. Acetyl-CoA-binding positions include A380, 386–387 (NY), S405, A423, and R440.

The protein in the N-terminal section; belongs to the N-acetylglucosamine-1-phosphate uridyltransferase family. It in the C-terminal section; belongs to the transferase hexapeptide repeat family. Homotrimer. Requires Mg(2+) as cofactor.

The protein resides in the cytoplasm. The enzyme catalyses alpha-D-glucosamine 1-phosphate + acetyl-CoA = N-acetyl-alpha-D-glucosamine 1-phosphate + CoA + H(+). It catalyses the reaction N-acetyl-alpha-D-glucosamine 1-phosphate + UTP + H(+) = UDP-N-acetyl-alpha-D-glucosamine + diphosphate. It participates in nucleotide-sugar biosynthesis; UDP-N-acetyl-alpha-D-glucosamine biosynthesis; N-acetyl-alpha-D-glucosamine 1-phosphate from alpha-D-glucosamine 6-phosphate (route II): step 2/2. It functions in the pathway nucleotide-sugar biosynthesis; UDP-N-acetyl-alpha-D-glucosamine biosynthesis; UDP-N-acetyl-alpha-D-glucosamine from N-acetyl-alpha-D-glucosamine 1-phosphate: step 1/1. The protein operates within bacterial outer membrane biogenesis; LPS lipid A biosynthesis. Its function is as follows. Catalyzes the last two sequential reactions in the de novo biosynthetic pathway for UDP-N-acetylglucosamine (UDP-GlcNAc). The C-terminal domain catalyzes the transfer of acetyl group from acetyl coenzyme A to glucosamine-1-phosphate (GlcN-1-P) to produce N-acetylglucosamine-1-phosphate (GlcNAc-1-P), which is converted into UDP-GlcNAc by the transfer of uridine 5-monophosphate (from uridine 5-triphosphate), a reaction catalyzed by the N-terminal domain. In Escherichia coli O6:K15:H31 (strain 536 / UPEC), this protein is Bifunctional protein GlmU.